The sequence spans 871 residues: Scavenger receptor class F member 2 (871 aa).

Positions 1 to 20 (MEGAGPRGAGPARRRGAGGP) are disordered. Positions 1–43 (MEGAGPRGAGPARRRGAGGPPSPLLPSLLLLLLLWMLPDTVAP) are cleaved as a signal peptide. Topologically, residues 44–441 (QELNPRGRNV…ACHLETNQRK (398 aa)) are extracellular. EGF-like domains lie at 71–110 (QGDE…ANCD), 122–153 (CKEL…ARCE), 148–182 (WGAR…AQCA), 183–212 (SACY…RSCN), 213–241 (NQCA…ARCD), and 236–270 (FGAR…KYCR). Disulfide bonds link Cys-75-Cys-86, Cys-80-Cys-98, Cys-100-Cys-109, Cys-126-Cys-134, Cys-128-Cys-141, Cys-143-Cys-152, Cys-156-Cys-163, Cys-158-Cys-170, Cys-172-Cys-181, Cys-185-Cys-193, Cys-187-Cys-200, Cys-202-Cys-211, Cys-215-Cys-222, Cys-217-Cys-229, Cys-231-Cys-240, Cys-244-Cys-251, Cys-246-Cys-258, and Cys-260-Cys-269. Asn-83 carries an N-linked (GlcNAc...) asparagine glycan. N-linked (GlcNAc...) asparagine glycans are attached at residues Asn-310 and Asn-365. Residues 372–403 (CAFVCADCGSGHCDFQSGRCLCSPGVHGPHCN) enclose the EGF-like 7 domain. 3 disulfides stabilise this stretch: Cys-376–Cys-384, Cys-379–Cys-391, and Cys-393–Cys-402. Asn-403 carries N-linked (GlcNAc...) asparagine glycosylation. A helical membrane pass occupies residues 442–462 (GVMGAGALLVLLVCLLLSLLG). Residues 463 to 871 (CCCACRGKDP…ELGRAGAPTL (409 aa)) lie on the Cytoplasmic side of the membrane. Ser-551 carries the post-translational modification Phosphoserine. Residues 570 to 579 (EAPAESRDPE) are compositionally biased toward basic and acidic residues. Residues 570-871 (EAPAESRDPE…ELGRAGAPTL (302 aa)) form a disordered region. Phosphoserine is present on Ser-613. Tyr-628 bears the Phosphotyrosine mark. A compositionally biased stretch (basic and acidic residues) spans 632–643 (ARREARPARARG). Residues Ser-651, Ser-653, Ser-710, Ser-718, and Ser-742 each carry the phosphoserine modification. Residues 705–725 (TPSDKSAHTVEHGSPRTRDPT) are compositionally biased toward basic and acidic residues. A compositionally biased stretch (low complexity) spans 821-831 (PPATETPGPEK). Positions 844–856 (KKTPIQKPPRKKS) are enriched in basic residues. Residues 861–871 (GELGRAGAPTL) show a composition bias toward low complexity.

As to quaternary structure, homophilic and heterophilic interaction via its extracellular domain. Interacts with SCARF1. The heterophilic interaction with SCARF1, which is stronger than the homophilic interaction with itself, is suppressed by the presence of SCARF1 ligand such as Ac-LDL. As to expression, predominantly expressed in endothelial cells. Expressed in heart, placenta, lung, kidney, spleen, small intestine and ovary.

The protein localises to the membrane. In terms of biological role, probable adhesion protein, which mediates homophilic and heterophilic interactions. In contrast to SCARF1, it poorly mediates the binding and degradation of acetylated low density lipoprotein (Ac-LDL). The polypeptide is Scavenger receptor class F member 2 (SCARF2) (Homo sapiens (Human)).